The chain runs to 301 residues: GTPase Era (301 aa).

Positions 6–173 (KSGFVAIVGR…LEQTNANLEI (168 aa)) constitute an Era-type G domain. The G1 stretch occupies residues 14–21 (GRPNVGKS). 14–21 (GRPNVGKS) contributes to the GTP binding site. The segment at 40 to 44 (QTTRN) is G2. The segment at 61–64 (DTPG) is G3. GTP contacts are provided by residues 61-65 (DTPGI) and 123-126 (NKID). The G4 stretch occupies residues 123-126 (NKID). The G5 stretch occupies residues 152-154 (ISA). Positions 204 to 282 (TREEVPHSVA…FLEIWVKVQK (79 aa)) constitute a KH type-2 domain.

The protein belongs to the TRAFAC class TrmE-Era-EngA-EngB-Septin-like GTPase superfamily. Era GTPase family. As to quaternary structure, monomer.

Its subcellular location is the cytoplasm. The protein resides in the cell membrane. In terms of biological role, an essential GTPase that binds both GDP and GTP, with rapid nucleotide exchange. Plays a role in 16S rRNA processing and 30S ribosomal subunit biogenesis and possibly also in cell cycle regulation and energy metabolism. The sequence is that of GTPase Era from Listeria monocytogenes serotype 4b (strain F2365).